Reading from the N-terminus, the 470-residue chain is Argininosuccinate lyase (470 aa).

The protein belongs to the lyase 1 family. Argininosuccinate lyase subfamily.

It is found in the cytoplasm. The catalysed reaction is 2-(N(omega)-L-arginino)succinate = fumarate + L-arginine. It participates in amino-acid biosynthesis; L-arginine biosynthesis; L-arginine from L-ornithine and carbamoyl phosphate: step 3/3. The protein is Argininosuccinate lyase of Prochlorococcus marinus (strain MIT 9303).